Consider the following 702-residue polypeptide: Polyribonucleotide nucleotidyltransferase 1 (702 aa).

Residues D483 and D489 each coordinate Mg(2+). The KH domain occupies P550–I609. The region spanning G619 to K687 is the S1 motif domain.

Belongs to the polyribonucleotide nucleotidyltransferase family. Requires Mg(2+) as cofactor.

Its subcellular location is the cytoplasm. The catalysed reaction is RNA(n+1) + phosphate = RNA(n) + a ribonucleoside 5'-diphosphate. Its function is as follows. Involved in mRNA degradation. Catalyzes the phosphorolysis of single-stranded polyribonucleotides processively in the 3'- to 5'-direction. The protein is Polyribonucleotide nucleotidyltransferase 1 of Alkaliphilus metalliredigens (strain QYMF).